We begin with the raw amino-acid sequence, 258 residues long: Bidirectional sugar transporter SWEET9 (258 aa).

At 1–7 the chain is on the extracellular side; sequence MFLKVHE. A helical transmembrane segment spans residues 8–28; that stretch reads IAFLFGLLGNIVSFGVFLSPV. The MtN3/slv 1 domain maps to 10-96; it reads FLFGLLGNIV…FLYILYAPRE (87 aa). At 29–42 the chain is on the cytoplasmic side; it reads PTFYGIYKKKSSKG. Residues 43–63 traverse the membrane as a helical segment; the sequence is FQSIPYICALASATLLLYYGI. Residues 64-69 are Extracellular-facing; the sequence is MKTHAY. The helical transmembrane segment at 70 to 90 threads the bilayer; sequence LIISINTFGCFIEISYLFLYI. Over 91–103 the chain is Cytoplasmic; that stretch reads LYAPREAKISTLK. The helical transmembrane segment at 104–124 threads the bilayer; the sequence is LIVICNIGGLGLLILLVNLLV. Over 125–131 the chain is Extracellular; the sequence is PKQHRVS. Residues 132-152 traverse the membrane as a helical segment; it reads TVGWVCAAYSLAVFASPLSVM. One can recognise a MtN3/slv 2 domain in the interval 132 to 216; that stretch reads TVGWVCAAYS…ILYMMYQGST (85 aa). At 153 to 165 the chain is on the cytoplasmic side; it reads RKVIKTKSVEYMP. Residues 166–186 form a helical membrane-spanning segment; it reads FLLSLSLTLNAVMWFFYGLLI. The Extracellular segment spans residues 187–189; the sequence is KDK. The chain crosses the membrane as a helical span at residues 190–210; that stretch reads FIAMPNILGFLFGVAQMILYM. Topologically, residues 211 to 258 are cytoplasmic; it reads MYQGSTKTDLPTENQLANKTDVNEVPIVAVELPDVGSDNVEGSVRPMK.

Belongs to the SWEET sugar transporter family. In terms of assembly, forms heterooligomers with SWEET1, SWEET5, SWEET8, SWEET11, SWEET13, SWEET16 and SWEET17. In terms of tissue distribution, specifically expressed in nectaries, mostly in the lower half of nectary parenchyma.

Its subcellular location is the cell membrane. The protein localises to the cytoplasmic vesicle membrane. It localises to the golgi apparatus. It is found in the trans-Golgi network membrane. Mediates both low-affinity uptake and efflux of sugar across the plasma membrane. Nectary-specific sugar transporter required for nectar production by mediating the secretion of sucrose from the nectary parenchyma to the extracellular space. This is Bidirectional sugar transporter SWEET9 from Arabidopsis thaliana (Mouse-ear cress).